The sequence spans 156 residues: V-type sodium ATPase subunit K (156 aa).

4 helical membrane passes run 11 to 31 (GMVF…IGSA), 60 to 80 (LLPG…FINL), 89 to 109 (GLNF…SGIA), and 132 to 152 (IIFA…SFLL).

It belongs to the V-ATPase proteolipid subunit family. The N-terminus is blocked.

It localises to the cell membrane. Its function is as follows. Involved in ATP-driven sodium extrusion. This chain is V-type sodium ATPase subunit K (ntpK), found in Enterococcus hirae (strain ATCC 9790 / DSM 20160 / JCM 8729 / LMG 6399 / NBRC 3181 / NCIMB 6459 / NCDO 1258 / NCTC 12367 / WDCM 00089 / R).